The following is a 504-amino-acid chain: DnaJ homolog subfamily C member 3 (504 aa).

The N-terminal stretch at Met-1–Cys-31 is a signal peptide. TPR repeat units lie at residues Val-37–Asn-70, Ile-72–Phe-104, Thr-105–Glu-138, Met-154–Asp-187, Ala-188–Asn-221, Thr-222–His-255, Leu-268–Val-301, Val-306–Asn-339, and Val-340–Asp-373. A disulfide bond links Cys-248 and Cys-258. Ser-274 carries the post-translational modification Phosphoserine. Cysteines 313 and 329 form a disulfide. The flexible linker stretch occupies residues Gln-375 to Arg-393. The J domain maps to Asp-394–Glu-462. The disordered stretch occupies residues Asp-451–Ser-481.

As to quaternary structure, interacts with EIF2AK4/GCN2; this interaction occurs under endoplasmic reticulum (ER) stress, hypothermic and amino acid starving stress conditions and inhibits EIF2AK4/GCN2 kinase activity. Interacts with EIF2AK3. Interacts with EIF2AK2. Forms a trimeric complex with DNAJB1 and HSPA8. Interacts with THAP12. In terms of tissue distribution, widely expressed, with high level in the liver.

It localises to the endoplasmic reticulum. Involved in the unfolded protein response (UPR) during endoplasmic reticulum (ER) stress. Acts as a negative regulator of the EIF2AK4/GCN2 kinase activity by preventing the phosphorylation of eIF-2-alpha at 'Ser-52' and hence attenuating general protein synthesis under ER stress, hypothermic and amino acid starving stress conditions. Co-chaperone of HSPA8/HSC70, it stimulates its ATPase activity. May inhibit both the autophosphorylation of EIF2AK2/PKR and the ability of EIF2AK2 to catalyze phosphorylation of the EIF2A. May inhibit EIF2AK3/PERK activity. In Mus musculus (Mouse), this protein is DnaJ homolog subfamily C member 3 (Dnajc3).